We begin with the raw amino-acid sequence, 110 residues long: Protein C-ets-2 (110 aa).

The segment at residues 1–84 (SGPIQLWQFL…AGKRYVYRFV (84 aa)) is a DNA-binding region (ETS).

The protein belongs to the ETS family.

It localises to the nucleus. Functionally, probable transcription factor. The sequence is that of Protein C-ets-2 (ETS-2) from Lytechinus variegatus (Green sea urchin).